The primary structure comprises 203 residues: Holliday junction branch migration complex subunit RuvA (203 aa).

The interval 1-64 (MIGRLRGTLA…EDAQLLYGFI (64 aa)) is domain I. The interval 65-143 (GKRDRDFFRE…AWEVVPSMFA (79 aa)) is domain II. The tract at residues 144 to 154 (LVPNQPDMPAG) is flexible linker. The domain III stretch occupies residues 155 to 203 (QVASAESDAVSALISLGYKPQEASKAVSAIKDKNLSSEDMIRRALKGMI).

This sequence belongs to the RuvA family. As to quaternary structure, homotetramer. Forms an RuvA(8)-RuvB(12)-Holliday junction (HJ) complex. HJ DNA is sandwiched between 2 RuvA tetramers; dsDNA enters through RuvA and exits via RuvB. An RuvB hexamer assembles on each DNA strand where it exits the tetramer. Each RuvB hexamer is contacted by two RuvA subunits (via domain III) on 2 adjacent RuvB subunits; this complex drives branch migration. In the full resolvosome a probable DNA-RuvA(4)-RuvB(12)-RuvC(2) complex forms which resolves the HJ.

Its subcellular location is the cytoplasm. Its function is as follows. The RuvA-RuvB-RuvC complex processes Holliday junction (HJ) DNA during genetic recombination and DNA repair, while the RuvA-RuvB complex plays an important role in the rescue of blocked DNA replication forks via replication fork reversal (RFR). RuvA specifically binds to HJ cruciform DNA, conferring on it an open structure. The RuvB hexamer acts as an ATP-dependent pump, pulling dsDNA into and through the RuvAB complex. HJ branch migration allows RuvC to scan DNA until it finds its consensus sequence, where it cleaves and resolves the cruciform DNA. The chain is Holliday junction branch migration complex subunit RuvA from Pseudomonas fluorescens (strain SBW25).